The following is a 337-amino-acid chain: Ferredoxin--NADP reductase (337 aa).

The FAD site is built by Asp35, Gln43, Tyr48, Ala88, Phe122, Asp289, and Thr330.

This sequence belongs to the ferredoxin--NADP reductase type 2 family. As to quaternary structure, homodimer. FAD is required as a cofactor.

The catalysed reaction is 2 reduced [2Fe-2S]-[ferredoxin] + NADP(+) + H(+) = 2 oxidized [2Fe-2S]-[ferredoxin] + NADPH. The protein is Ferredoxin--NADP reductase of Ehrlichia ruminantium (strain Gardel).